The following is a 187-amino-acid chain: MLALRPEHHDSITLRIEAEPAAEAEDADDALAGAEMLTLDLTVQHGDALKAAARKALPKQKDIEAWIAPALFADAQLNVRFVDEEEGRTLNHTYRGKDYATNVLTFSYAETEDDPVAADIVLCCPVVEQEAKDQGKPLRAHYAHLIVHGALHAQGYDHEDPAQAEEMEGIETEVLAGLGFPDPYADR.

Residues His-148, His-152, and His-158 each coordinate Zn(2+).

It belongs to the endoribonuclease YbeY family. Requires Zn(2+) as cofactor.

Its subcellular location is the cytoplasm. Functionally, single strand-specific metallo-endoribonuclease involved in late-stage 70S ribosome quality control and in maturation of the 3' terminus of the 16S rRNA. In Ralstonia nicotianae (strain ATCC BAA-1114 / GMI1000) (Ralstonia solanacearum), this protein is Endoribonuclease YbeY.